A 360-amino-acid chain; its full sequence is DNA replication and repair protein RecF (360 aa).

An ATP-binding site is contributed by 30–37; it reads GQNGSGKT.

Belongs to the RecF family.

It is found in the cytoplasm. Functionally, the RecF protein is involved in DNA metabolism; it is required for DNA replication and normal SOS inducibility. RecF binds preferentially to single-stranded, linear DNA. It also seems to bind ATP. This Shewanella sp. (strain MR-4) protein is DNA replication and repair protein RecF.